The following is a 279-amino-acid chain: Complement component 1 Q subcomponent-binding protein, mitochondrial (279 aa).

The N-terminal 71 residues, 1-71 (MLPLLRCVPR…PVPCACGCGA (71 aa)), are a transit peptide targeting the mitochondrion. The tract at residues 74 to 91 (TEGDKAFVEFLTDEIKEE) is C1q binding. N6-acetyllysine is present on residues Lys89 and Lys92. Residues 134–162 (NNSIPPTFDGEEEPSQGQKAEEQEPELTS) are disordered. The interaction with MAVS stretch occupies residues 166 to 210 (FVVEVTKTDGKKTLVLDCHYPEDEIGHEDEAESDIFSIKEVSFQT). A Phosphotyrosine modification is found at Tyr185. Phosphoserine occurs at positions 198 and 202. The residue at position 211 (Thr211) is a Phosphothreonine.

The protein belongs to the MAM33 family. In terms of assembly, homotrimer; three monomers form a donut-shaped structure with an unusually asymmetric charge distribution on the surface. Interacts with CDK13, HRK, VTN, NFYB, ADRA1B, FOXC1, DDX21, DDX50, NCL, SRSF1 and SRSF9. Interacts with CD93; the association may represent a cell surface C1q receptor. Interacts with KRT1; the association represents a cell surface kininogen receptor. Interacts with CD209; the interaction is indicative for a C1q:C1QBP:CD209 signaling complex. Interacts with FBL and RRP1; the respective interactions with C1QBP are competitive. Probably associates with the mitoribosome. Interacts with MAVS; the interaction occurs upon viral transfection. Interacts with PPIF. Interacts with U2AF1L4. Interacts with PLEKHN1. Interacts with VGF-derived peptide TLQP-21. Interacts with MRE11 and RAD50; forming the MRC (MRE11-RAD50-C1QBP) complex that inhibits the activity of MRE11. Ubiquitous.

It localises to the mitochondrion matrix. It is found in the nucleus. The protein resides in the cell membrane. Its subcellular location is the secreted. The protein localises to the cytoplasm. It localises to the nucleolus. In terms of biological role, multifunctional and multicompartmental protein involved in inflammation and infection processes, ribosome biogenesis, protein synthesis in mitochondria, regulation of apoptosis, transcriptional regulation and pre-mRNA splicing. At the cell surface is thought to act as an endothelial receptor for plasma proteins of the complement and kallikrein-kinin cascades. Putative receptor for C1q; specifically binds to the globular 'heads' of C1q thus inhibiting C1; may perform the receptor function through a complex with C1qR/CD93. In complex with cytokeratin-1/KRT1 is a high affinity receptor for kininogen-1/HMWK. Can also bind other plasma proteins, such as coagulation factor XII leading to its autoactivation. May function to bind initially fluid kininogen-1 to the cell membrane. The secreted form may enhance both extrinsic and intrinsic coagulation pathways. It is postulated that the cell surface form requires docking with transmembrane proteins for downstream signaling which might be specific for a cell-type or response. By acting as C1q receptor is involved in chemotaxis of immature dendritic cells and neutrophils and is proposed to signal through CD209/DC-SIGN on immature dendritic cells, through integrin alpha-4/beta-1 during trophoblast invasion of the decidua, and through integrin beta-1 during endothelial cell adhesion and spreading. Signaling involved in inhibition of innate immune response is implicating the PI3K-AKT/PKB pathway. Required for protein synthesis in mitochondria. In mitochondrial translation may be involved in formation of functional 55S mitoribosomes; the function seems to involve its RNA-binding activity. Acts as a RNA modification reader, which specifically recognizes and binds mitochondrial RNAs modified by C5-methylcytosine (m5C) in response to stress, and promotes recruitment of the mitochondrial degradosome complex, leading to their degradation. May be involved in the nucleolar ribosome maturation process; the function may involve the exchange of FBL for RRP1 in the association with pre-ribosome particles. Involved in regulation of RNA splicing by inhibiting the RNA-binding capacity of SRSF1 and its phosphorylation. Is required for the nuclear translocation of splicing factor U2AF1L4. Involved in regulation of CDKN2A- and HRK-mediated apoptosis. Stabilizes mitochondrial CDKN2A isoform smARF. May be involved in regulation of FOXC1 transcriptional activity and NFY/CCAAT-binding factor complex-mediated transcription. May play a role in antibacterial defense as it can bind to cell surface hyaluronan and inhibit Streptococcus pneumoniae hyaluronate lyase. May be involved in modulation of the immune response; ligation by HCV core protein is resulting in suppression of interleukin-12 production in monocyte-derived dendritic cells. Involved in regulation of antiviral response by inhibiting RIGI- and IFIH1-mediated signaling pathways probably involving its association with MAVS after viral infection. Acts as a regulator of DNA repair via homologous recombination by inhibiting the activity of MRE11: interacts with unphosphorylated MRE11 and RAD50 in absence of DNA damage, preventing formation and activity of the MRN complex. Following DNA damage, dissociates from phosphorylated MRE11, allowing formation of the MRN complex. This chain is Complement component 1 Q subcomponent-binding protein, mitochondrial (C1qbp), found in Rattus norvegicus (Rat).